The following is a 69-amino-acid chain: Conotoxin Lp3.1 (69 aa).

Positions 1–20 (MLKMGVLLFIFLVLFPLTTL) are cleaved as a signal peptide. Residues 21–54 (ELDTDRPVERHAAIKQDLKPQERRGIRLHAPRDE) constitute a propeptide that is removed on maturation. 3 disulfide bridges follow: Cys-55–Cys-67, Cys-56–Cys-65, and Cys-61–Cys-68.

This sequence belongs to the conotoxin M superfamily. As to expression, expressed by the venom duct.

It localises to the secreted. In Conus leopardus (Leopard cone), this protein is Conotoxin Lp3.1.